The following is a 617-amino-acid chain: MSIKQLSETLINQIAAGEVIERPASAAKELIENAIDAGASRIEIATAGGGKALLRITDNGCGMDGQDLALAVRRHCTSKLNESLMDIKSLGFRGEALPSIGSVARLTIASRRADSASAFQIAVEGGKVGEVRPAPGNPGTVVEVRDLFFATPARLKFLKTERAEAAAITEMVKRMAIAFPKIRFVLSGSDRSTLELPATGDDHLARIAQVLGPDFRDNAIALDAEREDVHLGGFAGVPTFNRGNSAHQYAFVNGRPVQDKLILSAIRGAYAETVPHGRYPVAVLALTVDPALVDVNVHPAKSDVRFRDPGLVRGLIVGAIRQSLTREGDRSSTAGAGAMLRAFRPGANGGFSEGAQAAANNSYAPAYGARPPQPSAWSVDTSPHRPLDDGQNRFDGLALPAARADAHVSPSQISEPVAMAMESGRFRLGAARAQVHANYIVAQTQDGLVIVDQHAAHERLVFEDMRKALSGRRLPSQGLLIPEIIGLPEEDCDRLMDHAENLDRLGLAIERFGPGAIAVRETPAMLGEVDVPGLVRQLADEIAEWETAGSLFARLEHVAATMACHGSVRSGRLLRVEEMNALLRKMEETPGSGQCNHGRPTYIELKLSDIERLFGRS.

Residues 363–394 (YAPAYGARPPQPSAWSVDTSPHRPLDDGQNRF) are disordered. Basic and acidic residues predominate over residues 382-392 (SPHRPLDDGQN).

It belongs to the DNA mismatch repair MutL/HexB family.

Functionally, this protein is involved in the repair of mismatches in DNA. It is required for dam-dependent methyl-directed DNA mismatch repair. May act as a 'molecular matchmaker', a protein that promotes the formation of a stable complex between two or more DNA-binding proteins in an ATP-dependent manner without itself being part of a final effector complex. This Allorhizobium ampelinum (strain ATCC BAA-846 / DSM 112012 / S4) (Agrobacterium vitis (strain S4)) protein is DNA mismatch repair protein MutL.